Reading from the N-terminus, the 221-residue chain is MSKKVVVIYSGGMDSFTVLHKAMQQGLTPYALTFDYGQRHIKEIEVAREVCEELGVHHKVIDISAINQLIGGSSLTDSSIDVAQGHYQQESMKSTVVPNRNMILLSLAIGYAVSLGAEQVYYGAHSGDHEIYPDCRPIFVEKMNDVAAVANYEKVEIFSPYLNNNKSGILKDGLAMGLDYSKTWTCYNGREKACGKCGSCVERLEAFAANGLKDPIAYEDT.

9–19 (YSGGMDSFTVL) is a binding site for ATP. Positions 186, 194, 197, and 200 each coordinate Zn(2+).

Belongs to the QueC family. The cofactor is Zn(2+).

The catalysed reaction is 7-carboxy-7-deazaguanine + NH4(+) + ATP = 7-cyano-7-deazaguanine + ADP + phosphate + H2O + H(+). It functions in the pathway purine metabolism; 7-cyano-7-deazaguanine biosynthesis. Its function is as follows. Catalyzes the ATP-dependent conversion of 7-carboxy-7-deazaguanine (CDG) to 7-cyano-7-deazaguanine (preQ(0)). This Psychromonas ingrahamii (strain DSM 17664 / CCUG 51855 / 37) protein is 7-cyano-7-deazaguanine synthase.